The chain runs to 70 residues: Putative membrane protein insertion efficiency factor (70 aa).

The protein belongs to the UPF0161 family.

Its subcellular location is the cell inner membrane. In terms of biological role, could be involved in insertion of integral membrane proteins into the membrane. This Rhizorhabdus wittichii (strain DSM 6014 / CCUG 31198 / JCM 15750 / NBRC 105917 / EY 4224 / RW1) (Sphingomonas wittichii) protein is Putative membrane protein insertion efficiency factor.